A 618-amino-acid chain; its full sequence is D-glucuronyl C5-epimerase (618 aa).

At 1–11 (MRCLAARVNYK) the chain is on the cytoplasmic side. The chain crosses the membrane as a helical; Signal-anchor for type II membrane protein span at residues 12–29 (TLIIICALFTLVTVLLWN). Topologically, residues 30–618 (KCSSDKAIQF…YLKGSRAKHN (589 aa)) are lumenal. Residues Tyr-180, 185-187 (RDR), Gln-202, Tyr-210, Gln-213, and Gln-216 each bind substrate. Positions 238, 240, 269, 270, and 393 each coordinate Ca(2+). Residues 430 to 433 (KLGE), 500 to 501 (EY), Asn-511, Tyr-515, Tyr-561, Arg-564, and 573 to 582 (NLARWDYHTT) contribute to the substrate site.

The protein belongs to the D-glucuronyl C5-epimerase family. In terms of assembly, homodimer. Interacts with HS2ST1. As to expression, widely expressed with highest levels in lung and lowest levels in spleen.

It is found in the golgi apparatus membrane. It catalyses the reaction [heparosan-N-sulfate](n) = [heparan-N-sulfate](n). It participates in glycan metabolism; heparan sulfate biosynthesis. It functions in the pathway glycan metabolism; heparin biosynthesis. Converts D-glucuronic acid residues adjacent to N-sulfate sugar residues to L-iduronic acid residues, both in maturing heparan sulfate (HS) and heparin chains. This is important for further modifications that determine the specificity of interactions between these glycosaminoglycans and proteins. The sequence is that of D-glucuronyl C5-epimerase (Glce) from Mus musculus (Mouse).